We begin with the raw amino-acid sequence, 525 residues long: Cytochrome P450 703A2 (525 aa).

Residues 3–23 (PFLLSIILCSWIFVVVSWKKL) form a helical membrane-spanning segment. Cys-455 contributes to the heme binding site.

Belongs to the cytochrome P450 family. Heme serves as cofactor.

Its subcellular location is the membrane. It carries out the reaction dodecanoate + reduced [NADPH--hemoprotein reductase] + O2 = 7-hydroxydodecanoate + oxidized [NADPH--hemoprotein reductase] + H2O + H(+). Its function is as follows. Involved in pollen exine and anther epicuticular layer development. Catalyzes the in-chain hydroxylation of lauric acid (C12:0) preferentially on position 7, generating 7-hydroxylated lauric acid. Does not possess activity with other fatty acids (C14:0, C16:0, C16:1, and C18:0). Participates in a conserved pathway of in-chain hydroxylation of lauric acid required for anther cuticle and pollen exine formation. Directly regulated by TDR, a known regulator of tapetum programmed cell death (PCD) and pollen exine formation. The chain is Cytochrome P450 703A2 from Oryza sativa subsp. japonica (Rice).